Reading from the N-terminus, the 59-residue chain is Preprotein translocase subunit SecG (59 aa).

At 1 to 35 (MPSSKKKKEDVPIASMAGLVRYYESEKEKVKISPK) the chain is on the cytoplasmic side. Residues 36–56 (VVVVASIVLIAGVIIASFIIP) form a helical membrane-spanning segment. Residues 57–59 (PPL) lie on the Extracellular side of the membrane.

It belongs to the SEC61-beta family. Component of the protein translocase complex. Heterotrimer consisting of alpha (SecY), beta (SecG) and gamma (SecE) subunits. Can form oligomers of the heterotrimer.

The protein localises to the cell membrane. In terms of biological role, involved in protein export. The function of the beta subunit is unknown, but it may be involved in stabilization of the trimeric complex. The chain is Preprotein translocase subunit SecG from Sulfolobus acidocaldarius (strain ATCC 33909 / DSM 639 / JCM 8929 / NBRC 15157 / NCIMB 11770).